Reading from the N-terminus, the 608-residue chain is Auxin response factor 3 (608 aa).

A disordered region spans residues 1–40 (MGGLIDLNVMETEEDETQTQTPSSASGSVSPTSSSSASVS). Low complexity predominate over residues 18–40 (QTQTPSSASGSVSPTSSSSASVS). The TF-B3 DNA-binding region spans 159–261 (FCKTLTASDT…KLRLGVRRAS (103 aa)).

Belongs to the ARF family. As to quaternary structure, homo and heterodimers. In terms of tissue distribution, expressed in the whole plant.

The protein resides in the nucleus. In terms of biological role, auxin response factors (ARFs) are transcriptional factors that bind specifically to the DNA sequence 5'-TGTCTC-3' found in the auxin-responsive promoter elements (AuxREs). Could act as transcriptional activator or repressor. Formation of heterodimers with Aux/IAA proteins may alter their ability to modulate early auxin response genes expression. Involved in the establishment or elaboration of tissue patterning during gynoecial development. This is Auxin response factor 3 (ARF3) from Arabidopsis thaliana (Mouse-ear cress).